A 495-amino-acid polypeptide reads, in one-letter code: Tubulin epsilon and delta complex protein 1 (495 aa).

Positions 355–387 form a coiled coil; the sequence is GGELDLVVRELQALEEELREAAERRRAAWEAKA. A disordered region spans residues 417-440; it reads CWERDGGPAQPHGPHRLVRREDGA. Positions 452-480 form a coiled coil; it reads IRTLRSQEACLEAVLRRLQGQCRQELARL.

Interacts with TEDC2. Found in a complex with TEDC1, TEDC2, TUBE1 and TUBD1.

It is found in the cell projection. The protein resides in the cilium. The protein localises to the cytoplasm. It localises to the cytoskeleton. Its subcellular location is the microtubule organizing center. It is found in the centrosome. The protein resides in the centriole. Its function is as follows. Acts as a positive regulator of ciliary hedgehog signaling. Required for centriole stability. May play a role in counteracting perturbation of actin filaments, such as after treatment with the actin depolymerizing microbial metabolite Chivosazole F. The protein is Tubulin epsilon and delta complex protein 1 of Homo sapiens (Human).